The chain runs to 254 residues: Insulin-like growth factor-binding protein 4 (254 aa).

Positions 1–21 (MLPFGLVAALLLAAGPRPSLG) are cleaved as a signal peptide. Positions 23–103 (EAIHCPPCSE…MHGQGVCTEL (81 aa)) constitute an IGFBP N-terminal domain. Disulfide bonds link Cys27/Cys53, Cys30/Cys55, Cys38/Cys56, Cys44/Cys59, Cys67/Cys80, and Cys74/Cys100. Asn125 carries N-linked (GlcNAc...) asparagine glycosylation. Disulfide bonds link Cys131-Cys138, Cys170-Cys200, Cys211-Cys222, and Cys224-Cys245. A Thyroglobulin type-1 domain is found at 167–245 (QGSCQSELHR…GLEPKGELDC (79 aa)). Phosphoserine is present on Ser251.

As to quaternary structure, binds IGF2 more than IGF1.

It localises to the secreted. Functionally, IGF-binding proteins prolong the half-life of the IGFs and have been shown to either inhibit or stimulate the growth promoting effects of the IGFs on cell culture. They alter the interaction of IGFs with their cell surface receptors. The chain is Insulin-like growth factor-binding protein 4 (Igfbp4) from Mus musculus (Mouse).